Reading from the N-terminus, the 177-residue chain is Large ribosomal subunit protein uL6 (177 aa).

It belongs to the universal ribosomal protein uL6 family. As to quaternary structure, part of the 50S ribosomal subunit.

In terms of biological role, this protein binds to the 23S rRNA, and is important in its secondary structure. It is located near the subunit interface in the base of the L7/L12 stalk, and near the tRNA binding site of the peptidyltransferase center. The protein is Large ribosomal subunit protein uL6 of Cupriavidus metallidurans (strain ATCC 43123 / DSM 2839 / NBRC 102507 / CH34) (Ralstonia metallidurans).